Consider the following 856-residue polypeptide: MRRVLMVNFGVLLLFCFGVLSNSFGQDNGGDSDINSTTAVYIVTLRQASSLHLFQQEAEEVKRVRDQSKHGDTSKFTRPKLQPRNISRSRYWRSRRSAIAQAHDSLLRNALKGEKYIKLYSFHYLINGFAVFVSSQQAETLSRRREVANIVLDFSVRTATTYTPQFMGLPKGAWVKEGGYETAGEGIVIGFIDTGIDPTHPSFNGTDTSQRQYPIPNHFSGVCEVTPDFPSGSCNRKLVGARHFAQSAITRGIFNSSEDYASPFDGDGHGTHTASIAAGNHGVSAVVSGHNFGSASGIAPRAHISVYKALYKSFGGFAADVVAAIDQAAQDGVDILSLSITPNRRPPGVATFFNPLDMAMLSAVKAGIFVVQAAGNTGPSPKSMSSFSPWIFTVGAASHDRDYSNSIVLGNNVSIPGVGLALRTDEGKKYTMISALDALKNKSSVVDKDMYVGECQDYGSFDKDVIRGNLLICSYSIRFVLGLSTIKQALAVAKNLSAKGVVFYMDPYVLGFQINPTPMDMPGIIIPSAEDSKVLLKYYNSSLVRDGTTKEIVRFGAVAAIAGGQNANFSNRAPKIMYYSARGPDPQDSLFNDADILKPNLVAPGNSIWGAWSSAATESTEFEGESFAMMSGTSMAAPHVAGVAALVKQKFRKFSPSAIASALSTTSVLFDNKGEAIMAQRAYANPDQTISPATPFDMGNGFVNATAALDPGLIFDTSFEDYMSFLCGINGSAPVVFNYTGTNCLRNNATISGSDLNLPSITVSKLNNTRTVQRLMTNIAGNETYTVSLITPFDVLINVSPTQFSIASGETKLLSVILTAKRNSSISSFGGIKLLGNAGHIVRIPVSVTVKIASKQ.

An N-terminal signal peptide occupies residues 1–21 (MRRVLMVNFGVLLLFCFGVLS). Positions 22–159 (NSFGQDNGGD…IVLDFSVRTA (138 aa)) are cleaved as a propeptide — activation peptide. Asn35 and Asn85 each carry an N-linked (GlcNAc...) asparagine glycan. Positions 40–159 (VYIVTLRQAS…IVLDFSVRTA (120 aa)) constitute an Inhibitor I9 domain. In terms of domain architecture, Peptidase S8 spans 164–709 (PQFMGLPKGA…NGFVNATAAL (546 aa)). Residue Asp193 is the Charge relay system of the active site. Asn204 and Asn255 each carry an N-linked (GlcNAc...) asparagine glycan. The active-site Charge relay system is His269. Residues Asn412, Asn441, Asn495, Asn540, and Asn568 are each glycosylated (N-linked (GlcNAc...) asparagine). In terms of domain architecture, PA spans 432–528 (MISALDALKN…MDMPGIIIPS (97 aa)). The Charge relay system role is filled by Ser634. N-linked (GlcNAc...) asparagine glycans are attached at residues Asn704, Asn730, Asn738, Asn748, Asn767, Asn782, and Asn823.

This sequence belongs to the peptidase S8 family.

It is found in the secreted. The polypeptide is Subtilisin-like protease SBT2.2 (Arabidopsis thaliana (Mouse-ear cress)).